The sequence spans 242 residues: ATP-dependent dethiobiotin synthetase BioD (242 aa).

12–17 serves as a coordination point for ATP; the sequence is EVGKTV. Position 16 (threonine 16) interacts with Mg(2+). Lysine 37 is an active-site residue. Residue serine 41 coordinates substrate. ATP contacts are provided by residues aspartate 51 and 112–115; that span reads EGAG. Aspartate 51 and glutamate 112 together coordinate Mg(2+).

Belongs to the dethiobiotin synthetase family. In terms of assembly, homodimer. The cofactor is Mg(2+).

Its subcellular location is the cytoplasm. It catalyses the reaction (7R,8S)-7,8-diammoniononanoate + CO2 + ATP = (4R,5S)-dethiobiotin + ADP + phosphate + 3 H(+). Its pathway is cofactor biosynthesis; biotin biosynthesis; biotin from 7,8-diaminononanoate: step 1/2. In terms of biological role, catalyzes a mechanistically unusual reaction, the ATP-dependent insertion of CO2 between the N7 and N8 nitrogen atoms of 7,8-diaminopelargonic acid (DAPA, also called 7,8-diammoniononanoate) to form a ureido ring. The protein is ATP-dependent dethiobiotin synthetase BioD of Bacillus cereus (strain B4264).